The chain runs to 428 residues: Gamma-glutamyl phosphate reductase (428 aa).

This sequence belongs to the gamma-glutamyl phosphate reductase family.

It localises to the cytoplasm. It carries out the reaction L-glutamate 5-semialdehyde + phosphate + NADP(+) = L-glutamyl 5-phosphate + NADPH + H(+). The protein operates within amino-acid biosynthesis; L-proline biosynthesis; L-glutamate 5-semialdehyde from L-glutamate: step 2/2. Functionally, catalyzes the NADPH-dependent reduction of L-glutamate 5-phosphate into L-glutamate 5-semialdehyde and phosphate. The product spontaneously undergoes cyclization to form 1-pyrroline-5-carboxylate. This chain is Gamma-glutamyl phosphate reductase, found in Afipia carboxidovorans (strain ATCC 49405 / DSM 1227 / KCTC 32145 / OM5) (Oligotropha carboxidovorans).